Reading from the N-terminus, the 148-residue chain is Hemoglobin subunit beta (148 aa).

In terms of domain architecture, Globin spans 3–148; that stretch reads DWTDAERSAI…VVSALGRQYH (146 aa). Residues His64 and His93 each coordinate heme b.

The protein belongs to the globin family. As to quaternary structure, heterotetramer of two alpha chains and two beta chains. As to expression, red blood cells.

Its function is as follows. Involved in oxygen transport from gills to the various peripheral tissues. This Oncorhynchus nerka (Sockeye salmon) protein is Hemoglobin subunit beta (hbb).